Consider the following 445-residue polypeptide: GTPase Der (445 aa).

2 EngA-type G domains span residues P3–Q167 and I180–M353. Residues G9–S16, D56–F60, N119–E122, G186–S193, D233–L237, and N298–D301 each bind GTP. A KH-like domain is found at A354–N438.

Belongs to the TRAFAC class TrmE-Era-EngA-EngB-Septin-like GTPase superfamily. EngA (Der) GTPase family. Associates with the 50S ribosomal subunit.

GTPase that plays an essential role in the late steps of ribosome biogenesis. The protein is GTPase Der of Burkholderia lata (strain ATCC 17760 / DSM 23089 / LMG 22485 / NCIMB 9086 / R18194 / 383).